The primary structure comprises 142 residues: Large ribosomal subunit protein uL11 (142 aa).

It belongs to the universal ribosomal protein uL11 family. As to quaternary structure, part of the ribosomal stalk of the 50S ribosomal subunit. Interacts with L10 and the large rRNA to form the base of the stalk. L10 forms an elongated spine to which L12 dimers bind in a sequential fashion forming a multimeric L10(L12)X complex. In terms of processing, one or more lysine residues are methylated.

Forms part of the ribosomal stalk which helps the ribosome interact with GTP-bound translation factors. The chain is Large ribosomal subunit protein uL11 from Bartonella bacilliformis (strain ATCC 35685 / KC583 / Herrer 020/F12,63).